A 185-amino-acid polypeptide reads, in one-letter code: Large ribosomal subunit protein uL5 (185 aa).

The protein belongs to the universal ribosomal protein uL5 family. In terms of assembly, part of the 50S ribosomal subunit; part of the 5S rRNA/L5/L18/L25 subcomplex. Contacts the 5S rRNA and the P site tRNA. Forms a bridge to the 30S subunit in the 70S ribosome.

This is one of the proteins that bind and probably mediate the attachment of the 5S RNA into the large ribosomal subunit, where it forms part of the central protuberance. In the 70S ribosome it contacts protein S13 of the 30S subunit (bridge B1b), connecting the 2 subunits; this bridge is implicated in subunit movement. Contacts the P site tRNA; the 5S rRNA and some of its associated proteins might help stabilize positioning of ribosome-bound tRNAs. This is Large ribosomal subunit protein uL5 from Caulobacter sp. (strain K31).